The primary structure comprises 276 residues: Adenylate kinase (276 aa).

50 to 55 serves as a coordination point for ATP; it reads GAGKGT. Positions 70 to 99 are NMP; that stretch reads ATGDMLRSQVAKKTPLGREAKKIMDQGGLV. AMP is bound by residues Thr-71, Arg-76, 97–99, 126–129, and Gln-133; these read GLV and GFPR. Residues 167–204 are LID; the sequence is GRLVHPASGRSYHTTFNPPKKAMTDDVTGEPLIQRSDD. ATP is bound by residues Arg-168 and 177–178; that span reads SY. Positions 201 and 212 each coordinate AMP. Gln-240 contacts ATP.

It belongs to the adenylate kinase family. AK2 subfamily. In terms of assembly, monomer.

Its subcellular location is the cytoplasm. The protein resides in the cytosol. It localises to the mitochondrion intermembrane space. The enzyme catalyses AMP + ATP = 2 ADP. Functionally, catalyzes the reversible transfer of the terminal phosphate group between ATP and AMP. Plays an important role in cellular energy homeostasis and in adenine nucleotide metabolism. Adenylate kinase activity is critical for regulation of the phosphate utilization and the AMP de novo biosynthesis pathways. This chain is Adenylate kinase, found in Pyricularia oryzae (strain 70-15 / ATCC MYA-4617 / FGSC 8958) (Rice blast fungus).